The following is a 349-amino-acid chain: Interferon-stimulated 20 kDa exonuclease-like 2 (349 aa).

2 disordered regions span residues 1-100 and 126-166; these read MSTL…AAVP and ALPK…KYSG. Residues 14–23 show a composition bias toward basic and acidic residues; the sequence is PPKKALEGNA. Positions 24-47 are enriched in basic residues; sequence KHRKFVKKRRLLERKGFLNKKKQP. Basic and acidic residues predominate over residues 54–66; the sequence is LHSEPSQKGETPR. The span at 70–87 shows a compositional bias: low complexity; the sequence is TWKATPLPKKKTTAASSS. The span at 130–142 shows a compositional bias: basic residues; sequence IKSHPTRPQKKGS. One can recognise an Exonuclease domain in the interval 175–331; that stretch reads MVAIDCEMVG…EDAQATMELY (157 aa).

Its subcellular location is the nucleus. The protein resides in the nucleolus. Functionally, 3'-&gt; 5'-exoribonuclease involved in ribosome biogenesis in the processing of the 12S pre-rRNA. Displays a strong specificity for a 3'-end containing a free hydroxyl group. This is Interferon-stimulated 20 kDa exonuclease-like 2 (ISG20L2) from Bos taurus (Bovine).